The following is a 97-amino-acid chain: Putative septation protein SpoVG (97 aa).

It belongs to the SpoVG family.

Its function is as follows. Essential for sporulation. Interferes with or is a negative regulator of the pathway leading to asymmetric septation. This is Putative septation protein SpoVG from Bacillus cytotoxicus (strain DSM 22905 / CIP 110041 / 391-98 / NVH 391-98).